A 245-amino-acid polypeptide reads, in one-letter code: CTD nuclear envelope phosphatase 1B (245 aa).

The helical transmembrane segment at 7 to 29 (CLLGVRTFHGVTSRIWSFFLYIL) threads the bilayer. In terms of domain architecture, FCP1 homology spans 58 to 225 (NNVKRKILVL…LNLLPMLDAL (168 aa)).

It belongs to the dullard family.

Its subcellular location is the endoplasmic reticulum membrane. It localises to the nucleus membrane. It carries out the reaction O-phospho-L-seryl-[protein] + H2O = L-seryl-[protein] + phosphate. It catalyses the reaction O-phospho-L-threonyl-[protein] + H2O = L-threonyl-[protein] + phosphate. Its function is as follows. Serine/threonine protein phosphatase that may dephosphorylate and activate lipins. Lipins are phosphatidate phosphatases that catalyze the conversion of phosphatidic acid to diacylglycerol and control the metabolism of fatty acids at different levels. May indirectly modulate the lipid composition of nuclear and/or endoplasmic reticulum membranes and be required for proper nuclear membrane morphology and/or dynamics. May also indirectly regulate the production of lipid droplets and triacylglycerol. May antagonize BMP signaling. The polypeptide is CTD nuclear envelope phosphatase 1B (ctdnep1b) (Danio rerio (Zebrafish)).